Consider the following 339-residue polypeptide: Ketol-acid reductoisomerase (NADP(+)) (339 aa).

In terms of domain architecture, KARI N-terminal Rossmann spans 1 to 182; that stretch reads MRVYYDRDAD…GGGRAGVIET (182 aa). NADP(+) is bound by residues 24 to 27, Arg-48, Ser-51, Thr-53, and 83 to 86; these read YGSQ and DELQ. Residue His-108 is part of the active site. Gly-134 contacts NADP(+). Residues 183–328 form the KARI C-terminal knotted domain; sequence TFKEECETDL…KKLRSMMPWI (146 aa). Residues Asp-191, Glu-195, Glu-227, and Glu-231 each contribute to the Mg(2+) site. Ser-252 is a substrate binding site.

The protein belongs to the ketol-acid reductoisomerase family. Mg(2+) is required as a cofactor.

It catalyses the reaction (2R)-2,3-dihydroxy-3-methylbutanoate + NADP(+) = (2S)-2-acetolactate + NADPH + H(+). The catalysed reaction is (2R,3R)-2,3-dihydroxy-3-methylpentanoate + NADP(+) = (S)-2-ethyl-2-hydroxy-3-oxobutanoate + NADPH + H(+). It functions in the pathway amino-acid biosynthesis; L-isoleucine biosynthesis; L-isoleucine from 2-oxobutanoate: step 2/4. Its pathway is amino-acid biosynthesis; L-valine biosynthesis; L-valine from pyruvate: step 2/4. Involved in the biosynthesis of branched-chain amino acids (BCAA). Catalyzes an alkyl-migration followed by a ketol-acid reduction of (S)-2-acetolactate (S2AL) to yield (R)-2,3-dihydroxy-isovalerate. In the isomerase reaction, S2AL is rearranged via a Mg-dependent methyl migration to produce 3-hydroxy-3-methyl-2-ketobutyrate (HMKB). In the reductase reaction, this 2-ketoacid undergoes a metal-dependent reduction by NADPH to yield (R)-2,3-dihydroxy-isovalerate. The chain is Ketol-acid reductoisomerase (NADP(+)) from Bartonella tribocorum (strain CIP 105476 / IBS 506).